Consider the following 170-residue polypeptide: Adenine phosphoribosyltransferase (170 aa).

It belongs to the purine/pyrimidine phosphoribosyltransferase family. In terms of assembly, homodimer.

The protein localises to the cytoplasm. The catalysed reaction is AMP + diphosphate = 5-phospho-alpha-D-ribose 1-diphosphate + adenine. It functions in the pathway purine metabolism; AMP biosynthesis via salvage pathway; AMP from adenine: step 1/1. Functionally, catalyzes a salvage reaction resulting in the formation of AMP, that is energically less costly than de novo synthesis. The sequence is that of Adenine phosphoribosyltransferase from Maridesulfovibrio salexigens (strain ATCC 14822 / DSM 2638 / NCIMB 8403 / VKM B-1763) (Desulfovibrio salexigens).